The chain runs to 179 residues: Large ribosomal subunit protein uL6 (179 aa).

This sequence belongs to the universal ribosomal protein uL6 family. Part of the 50S ribosomal subunit.

Functionally, this protein binds to the 23S rRNA, and is important in its secondary structure. It is located near the subunit interface in the base of the L7/L12 stalk, and near the tRNA binding site of the peptidyltransferase center. This Chlorobium phaeobacteroides (strain DSM 266 / SMG 266 / 2430) protein is Large ribosomal subunit protein uL6.